Consider the following 255-residue polypeptide: Aliphatic sulfonates import ATP-binding protein SsuB (255 aa).

Residues 12 to 233 form the ABC transporter domain; the sequence is LLLNAVSKHY…RLGSVRLAEL (222 aa). 44–51 lines the ATP pocket; sequence GRSGGGKS.

It belongs to the ABC transporter superfamily. Aliphatic sulfonates importer (TC 3.A.1.17.2) family. The complex is composed of two ATP-binding proteins (SsuB), two transmembrane proteins (SsuC) and a solute-binding protein (SsuA).

It is found in the cell inner membrane. The catalysed reaction is ATP + H2O + aliphatic sulfonate-[sulfonate-binding protein]Side 1 = ADP + phosphate + aliphatic sulfonateSide 2 + [sulfonate-binding protein]Side 1.. Its function is as follows. Part of the ABC transporter complex SsuABC involved in aliphatic sulfonates import. Responsible for energy coupling to the transport system. This chain is Aliphatic sulfonates import ATP-binding protein SsuB, found in Escherichia coli O6:H1 (strain CFT073 / ATCC 700928 / UPEC).